A 273-amino-acid chain; its full sequence is Formamidopyrimidine-DNA glycosylase (273 aa).

Residue proline 2 is the Schiff-base intermediate with DNA of the active site. Glutamate 3 (proton donor) is an active-site residue. The Proton donor; for beta-elimination activity role is filled by lysine 60. Positions 94, 113, and 154 each coordinate DNA. The segment at 239 to 273 adopts an FPG-type zinc-finger fold; it reads EAYGRTGEPCRRCGTPIERIVVAQRSTHICPVCQA. Catalysis depends on arginine 263, which acts as the Proton donor; for delta-elimination activity.

Belongs to the FPG family. In terms of assembly, monomer. Zn(2+) serves as cofactor.

The enzyme catalyses Hydrolysis of DNA containing ring-opened 7-methylguanine residues, releasing 2,6-diamino-4-hydroxy-5-(N-methyl)formamidopyrimidine.. It catalyses the reaction 2'-deoxyribonucleotide-(2'-deoxyribose 5'-phosphate)-2'-deoxyribonucleotide-DNA = a 3'-end 2'-deoxyribonucleotide-(2,3-dehydro-2,3-deoxyribose 5'-phosphate)-DNA + a 5'-end 5'-phospho-2'-deoxyribonucleoside-DNA + H(+). Its function is as follows. Involved in base excision repair of DNA damaged by oxidation or by mutagenic agents. Acts as a DNA glycosylase that recognizes and removes damaged bases. Has a preference for oxidized purines, such as 7,8-dihydro-8-oxoguanine (8-oxoG). Has AP (apurinic/apyrimidinic) lyase activity and introduces nicks in the DNA strand. Cleaves the DNA backbone by beta-delta elimination to generate a single-strand break at the site of the removed base with both 3'- and 5'-phosphates. This chain is Formamidopyrimidine-DNA glycosylase, found in Herpetosiphon aurantiacus (strain ATCC 23779 / DSM 785 / 114-95).